We begin with the raw amino-acid sequence, 206 residues long: Putative 3-methyladenine DNA glycosylase (206 aa).

It belongs to the DNA glycosylase MPG family.

In Staphylococcus carnosus (strain TM300), this protein is Putative 3-methyladenine DNA glycosylase.